The chain runs to 500 residues: MTIFDNYEVWFVIGSQHLYGPKTLRQVTQHAEHVVKALNTEAKLPCKLVLKPLGTSPDEITAICRDANYDDRCAGLVVWLHTFSPAKMWINGLSILNKPLLQFHTQFNAALPWDSIDMDFMNLNQTAHGGREFGFIGARMRQQHAVVTGHWQDKEAHTRISAWMRQAVSKQDIRQLKVCRFGDNMREVAVTDGDKVAAQIKFGFSVNTWAVGDLVQVVNSISDGDINALIDEYESSYTLTPATRIHGDKRQNVREAARIELGIKRFLEQGGFHAFTTTFEDLHGLKQLPGLAVQRLMQQGYGFAGEGDWKTAALLRIMKVMSTGLQGGTSFMEDYTYHFEKGNDLVLGSHMLEVCPSIAVEEKPLLDVQHLGIGGKEDPARLIFNTQTGSAIVASLIDLGDRYRLLVNCIDTVKTPHDLPKLPVANALWKAQPDLPTASEAWILAGGAHHTVFSHALDLNDMRQFAEMHDIEIAVIDNDTHLPGFKDALRWNDMYYSLKH.

Positions 306, 333, 350, and 450 each coordinate Mn(2+).

It belongs to the arabinose isomerase family. Homohexamer. It depends on Mn(2+) as a cofactor.

The enzyme catalyses beta-L-arabinopyranose = L-ribulose. The protein operates within carbohydrate degradation; L-arabinose degradation via L-ribulose; D-xylulose 5-phosphate from L-arabinose (bacterial route): step 1/3. Its function is as follows. Catalyzes the conversion of L-arabinose to L-ribulose. The chain is L-arabinose isomerase from Salmonella arizonae (strain ATCC BAA-731 / CDC346-86 / RSK2980).